The chain runs to 299 residues: Probable phosphate butyryltransferase (299 aa).

This sequence belongs to the phosphate acetyltransferase and butyryltransferase family.

It catalyses the reaction butanoyl-CoA + phosphate = butanoyl phosphate + CoA. Catalyzes the conversion of butyryl-CoA through butyryl phosphate to butyrate. The protein is Probable phosphate butyryltransferase (yqiS) of Bacillus subtilis (strain 168).